Consider the following 729-residue polypeptide: Carbon monoxide dehydrogenase/acetyl-CoA synthase subunit alpha (729 aa).

[4Fe-4S] cluster is bound by residues Cys-506, Cys-509, Cys-518, and Cys-528. Residue Cys-509 coordinates Ni(2+). Residues Cys-595, Gly-596, and Cys-597 each coordinate Ni(2+).

Tetramer of two alpha and two beta chains. Requires Ni cation as cofactor. It depends on [4Fe-4S] cluster as a cofactor.

The catalysed reaction is Co(I)-[corrinoid Fe-S protein] + acetyl-CoA + H(+) = methyl-Co(III)-[corrinoid Fe-S protein] + CO + CoA. Functionally, the beta subunit generates CO from CO(2), while the alpha subunit (this protein) combines the CO with CoA and a methyl group to form acetyl-CoA. The methyl group, which is incorporated into acetyl-CoA, is transferred to the alpha subunit by a corrinoid iron-sulfur protein. The protein is Carbon monoxide dehydrogenase/acetyl-CoA synthase subunit alpha of Moorella thermoacetica (Clostridium thermoaceticum).